A 212-amino-acid polypeptide reads, in one-letter code: Ribonuclease HII (212 aa).

The region spanning 17-206 (RVIAGVDEAG…KSTKPQSLQT (190 aa)) is the RNase H type-2 domain. Positions 23, 24, and 115 each coordinate a divalent metal cation.

Belongs to the RNase HII family. Mn(2+) is required as a cofactor. It depends on Mg(2+) as a cofactor.

The protein resides in the cytoplasm. The enzyme catalyses Endonucleolytic cleavage to 5'-phosphomonoester.. Endonuclease that specifically degrades the RNA of RNA-DNA hybrids. In Syntrophus aciditrophicus (strain SB), this protein is Ribonuclease HII.